A 205-amino-acid polypeptide reads, in one-letter code: Holliday junction branch migration complex subunit RuvA (205 aa).

Residues 1–64 (MIGKLRGIVD…DEAIRLIGFT (64 aa)) are domain I. The domain II stretch occupies residues 65–143 (TDSEREWFRL…DSMGLSAALE (79 aa)). The tract at residues 144–152 (VGVNGEAVS) is flexible linker. Residues 153–205 (SVSAPARDAVSALVNLGYPQAQAMGAVAAAAKRLDDAASTEQLIRHGLKELAR) are domain III.

Belongs to the RuvA family. As to quaternary structure, homotetramer. Forms an RuvA(8)-RuvB(12)-Holliday junction (HJ) complex. HJ DNA is sandwiched between 2 RuvA tetramers; dsDNA enters through RuvA and exits via RuvB. An RuvB hexamer assembles on each DNA strand where it exits the tetramer. Each RuvB hexamer is contacted by two RuvA subunits (via domain III) on 2 adjacent RuvB subunits; this complex drives branch migration. In the full resolvosome a probable DNA-RuvA(4)-RuvB(12)-RuvC(2) complex forms which resolves the HJ.

It localises to the cytoplasm. Functionally, the RuvA-RuvB-RuvC complex processes Holliday junction (HJ) DNA during genetic recombination and DNA repair, while the RuvA-RuvB complex plays an important role in the rescue of blocked DNA replication forks via replication fork reversal (RFR). RuvA specifically binds to HJ cruciform DNA, conferring on it an open structure. The RuvB hexamer acts as an ATP-dependent pump, pulling dsDNA into and through the RuvAB complex. HJ branch migration allows RuvC to scan DNA until it finds its consensus sequence, where it cleaves and resolves the cruciform DNA. The protein is Holliday junction branch migration complex subunit RuvA of Parvibaculum lavamentivorans (strain DS-1 / DSM 13023 / NCIMB 13966).